A 159-amino-acid chain; its full sequence is Ribosomal RNA large subunit methyltransferase H (159 aa).

Residues leucine 76, glycine 108, and 127-132 (LSKMTY) contribute to the S-adenosyl-L-methionine site.

Belongs to the RNA methyltransferase RlmH family. In terms of assembly, homodimer.

The protein resides in the cytoplasm. The enzyme catalyses pseudouridine(1915) in 23S rRNA + S-adenosyl-L-methionine = N(3)-methylpseudouridine(1915) in 23S rRNA + S-adenosyl-L-homocysteine + H(+). Specifically methylates the pseudouridine at position 1915 (m3Psi1915) in 23S rRNA. This is Ribosomal RNA large subunit methyltransferase H from Ruminiclostridium cellulolyticum (strain ATCC 35319 / DSM 5812 / JCM 6584 / H10) (Clostridium cellulolyticum).